The sequence spans 198 residues: Large ribosomal subunit protein bL25 (198 aa).

It belongs to the bacterial ribosomal protein bL25 family. CTC subfamily. Part of the 50S ribosomal subunit; part of the 5S rRNA/L5/L18/L25 subcomplex. Contacts the 5S rRNA. Binds to the 5S rRNA independently of L5 and L18.

Functionally, this is one of the proteins that binds to the 5S RNA in the ribosome where it forms part of the central protuberance. This Azotobacter vinelandii (strain DJ / ATCC BAA-1303) protein is Large ribosomal subunit protein bL25.